The sequence spans 368 residues: Polymerase delta-interacting protein 2 (368 aa).

The N-terminal 21 residues, 1-21, are a transit peptide targeting the mitochondrion; sequence MAGCVARRALAVGSRWWSRSL. Residues 235–360 enclose the ApaG domain; that stretch reads RETTENIRVT…FSLESNKDEK (126 aa). Thr292 carries the post-translational modification Phosphothreonine.

As to quaternary structure, interacts with PCNA and POLD2. Interacts with SSBP1. Interacts with PRIMPOL; leading to enhance DNA polymerase activity of PRIMPOL. Interacts with POLH. Interacts with POLD1; leading to stimulate DNA polymerase activity of POLD1.

Its subcellular location is the mitochondrion matrix. It localises to the nucleus. Functionally, involved in DNA damage tolerance by regulating translesion synthesis (TLS) of templates carrying DNA damage lesions such as 8oxoG and abasic sites. May act by stimulating activity of DNA polymerases involved in TLS, such as PRIMPOL and polymerase delta (POLD1). The chain is Polymerase delta-interacting protein 2 from Mus musculus (Mouse).